A 308-amino-acid chain; its full sequence is Aspartate carbamoyltransferase catalytic subunit (308 aa).

Carbamoyl phosphate is bound by residues Arg-51 and Thr-52. Lys-79 is a binding site for L-aspartate. 3 residues coordinate carbamoyl phosphate: Arg-101, His-130, and Gln-133. Positions 163 and 215 each coordinate L-aspartate. Residues Ala-258 and Pro-259 each contribute to the carbamoyl phosphate site.

Belongs to the aspartate/ornithine carbamoyltransferase superfamily. ATCase family. As to quaternary structure, heterododecamer (2C3:3R2) of six catalytic PyrB chains organized as two trimers (C3), and six regulatory PyrI chains organized as three dimers (R2).

It carries out the reaction carbamoyl phosphate + L-aspartate = N-carbamoyl-L-aspartate + phosphate + H(+). Its pathway is pyrimidine metabolism; UMP biosynthesis via de novo pathway; (S)-dihydroorotate from bicarbonate: step 2/3. In terms of biological role, catalyzes the condensation of carbamoyl phosphate and aspartate to form carbamoyl aspartate and inorganic phosphate, the committed step in the de novo pyrimidine nucleotide biosynthesis pathway. The chain is Aspartate carbamoyltransferase catalytic subunit from Pediococcus pentosaceus (strain ATCC 25745 / CCUG 21536 / LMG 10740 / 183-1w).